Here is a 466-residue protein sequence, read N- to C-terminus: MKLYNTLSRTKEEFEPLNDKIVNMYVCGPTVYNYIHIGNARAFIVFDTVRRYLEYKGYKVNYVQNFTDIDDKIIKRAQEENVTTKEVAEKYIEEYFIDADNLGIKRATVHPKATEHIEDIIEFIKILIDKGYAYVVNGNVYFETAKFKDYGKLSHKNIEELQAGARIEINEEKKNPLDFVLWKAQKPGEPAWDSPWGKGRPGWHIECSVMSTKYLGKTLDIHAGGPDLVFPHHENEIAQSEAAYGQPFSKYWMHIGYLNINNEKMSKSKGNFFTVREITEKYNPEVLRLFMLMAHYRSPINFSLDLMEQAKSAYERLLNAVANLKHLLTVCKDRELNEEEKRIKEKFEEYKKEFEDAMDDDFNTADAISVLFEMSKTANTNISGNSSKKLVEYILDIFLKLSEILGLSYRGVETELNDEEILALIEERQKARKEKNWKLADEIRDRLREKGIILEDTPEGVRWKRV.

Zn(2+) is bound at residue cysteine 27. Positions 29-39 (PTVYNYIHIGN) match the 'HIGH' region motif. Zn(2+)-binding residues include cysteine 207, histidine 232, and glutamate 236. The 'KMSKS' region motif lies at 264-268 (KMSKS). Lysine 267 contacts ATP.

It belongs to the class-I aminoacyl-tRNA synthetase family. As to quaternary structure, monomer. Zn(2+) serves as cofactor.

The protein localises to the cytoplasm. It carries out the reaction tRNA(Cys) + L-cysteine + ATP = L-cysteinyl-tRNA(Cys) + AMP + diphosphate. The polypeptide is Cysteine--tRNA ligase (Thermoanaerobacter pseudethanolicus (strain ATCC 33223 / 39E) (Clostridium thermohydrosulfuricum)).